We begin with the raw amino-acid sequence, 188 residues long: Probable nicotinate-nucleotide adenylyltransferase (188 aa).

It belongs to the NadD family.

The enzyme catalyses nicotinate beta-D-ribonucleotide + ATP + H(+) = deamido-NAD(+) + diphosphate. The protein operates within cofactor biosynthesis; NAD(+) biosynthesis; deamido-NAD(+) from nicotinate D-ribonucleotide: step 1/1. Catalyzes the reversible adenylation of nicotinate mononucleotide (NaMN) to nicotinic acid adenine dinucleotide (NaAD). The sequence is that of Probable nicotinate-nucleotide adenylyltransferase from Listeria innocua serovar 6a (strain ATCC BAA-680 / CLIP 11262).